Consider the following 422-residue polypeptide: Tyrosine--tRNA ligase 1 (422 aa).

Position 36 (Y36) interacts with L-tyrosine. The 'HIGH' region signature appears at 41–50 (PTAGSLHIGH). 2 residues coordinate L-tyrosine: Y173 and Q177. Positions 233–237 (KFGKT) match the 'KMSKS' region motif. An ATP-binding site is contributed by K236. The S4 RNA-binding domain occupies 355–419 (SDVVTLLLET…GKKQFAMVKL (65 aa)).

Belongs to the class-I aminoacyl-tRNA synthetase family. TyrS type 1 subfamily. As to quaternary structure, homodimer.

It localises to the cytoplasm. The catalysed reaction is tRNA(Tyr) + L-tyrosine + ATP = L-tyrosyl-tRNA(Tyr) + AMP + diphosphate + H(+). In terms of biological role, catalyzes the attachment of tyrosine to tRNA(Tyr) in a two-step reaction: tyrosine is first activated by ATP to form Tyr-AMP and then transferred to the acceptor end of tRNA(Tyr). This is Tyrosine--tRNA ligase 1 from Vibrio vulnificus (strain YJ016).